The chain runs to 690 residues: UvrABC system protein C (690 aa).

Positions 1–60 (MTTDSSDPAKPAGPGQPPGSGADTRPGGLATGQDVDPATIETDEDDEARLPDVPDEPTDA) are disordered. The segment covering 41–58 (ETDEDDEARLPDVPDEPT) has biased composition (acidic residues). The 79-residue stretch at 82-160 (TSPGVYRMMN…IKQLRPRFNV (79 aa)) folds into the GIY-YIG domain. Residues 270-305 (RAVKEELAREMEKASGDLAFERAALYRDRLAALSAI) enclose the UVR domain.

It belongs to the UvrC family. As to quaternary structure, interacts with UvrB in an incision complex.

The protein resides in the cytoplasm. Its function is as follows. The UvrABC repair system catalyzes the recognition and processing of DNA lesions. UvrC both incises the 5' and 3' sides of the lesion. The N-terminal half is responsible for the 3' incision and the C-terminal half is responsible for the 5' incision. The sequence is that of UvrABC system protein C from Nitrobacter hamburgensis (strain DSM 10229 / NCIMB 13809 / X14).